The following is a 477-amino-acid chain: Ribulose bisphosphate carboxylase large chain (477 aa).

A propeptide spanning residues 1-2 is cleaved from the precursor; that stretch reads MS. Residue Pro-3 is modified to N-acetylproline. An N6,N6,N6-trimethyllysine modification is found at Lys-14. Thr-173 lines the substrate pocket. The active-site Proton acceptor is Lys-175. Lys-177 contacts substrate. Positions 201, 203, and 204 each coordinate Mg(2+). Lys-201 carries the post-translational modification N6-carboxylysine. His-294 functions as the Proton acceptor in the catalytic mechanism. Arg-295, His-327, and Ser-379 together coordinate substrate.

The protein belongs to the RuBisCO large chain family. Type I subfamily. In terms of assembly, heterohexadecamer of 8 large chains and 8 small chains; disulfide-linked. The disulfide link is formed within the large subunit homodimers. It depends on Mg(2+) as a cofactor. In terms of processing, the disulfide bond which can form in the large chain dimeric partners within the hexadecamer appears to be associated with oxidative stress and protein turnover.

The protein localises to the plastid. It is found in the chloroplast. The enzyme catalyses 2 (2R)-3-phosphoglycerate + 2 H(+) = D-ribulose 1,5-bisphosphate + CO2 + H2O. It carries out the reaction D-ribulose 1,5-bisphosphate + O2 = 2-phosphoglycolate + (2R)-3-phosphoglycerate + 2 H(+). In terms of biological role, ruBisCO catalyzes two reactions: the carboxylation of D-ribulose 1,5-bisphosphate, the primary event in carbon dioxide fixation, as well as the oxidative fragmentation of the pentose substrate in the photorespiration process. Both reactions occur simultaneously and in competition at the same active site. The protein is Ribulose bisphosphate carboxylase large chain of Gerbera jamesonii (Transvaal daisy).